Reading from the N-terminus, the 412-residue chain is Serine hydroxymethyltransferase (412 aa).

(6S)-5,6,7,8-tetrahydrofolate contacts are provided by residues leucine 117 and 121–123 (GHL). Lysine 226 is modified (N6-(pyridoxal phosphate)lysine).

It belongs to the SHMT family. In terms of assembly, homodimer. Pyridoxal 5'-phosphate is required as a cofactor.

Its subcellular location is the cytoplasm. It catalyses the reaction (6R)-5,10-methylene-5,6,7,8-tetrahydrofolate + glycine + H2O = (6S)-5,6,7,8-tetrahydrofolate + L-serine. Its pathway is one-carbon metabolism; tetrahydrofolate interconversion. The protein operates within amino-acid biosynthesis; glycine biosynthesis; glycine from L-serine: step 1/1. Its function is as follows. Catalyzes the reversible interconversion of serine and glycine with tetrahydrofolate (THF) serving as the one-carbon carrier. This reaction serves as the major source of one-carbon groups required for the biosynthesis of purines, thymidylate, methionine, and other important biomolecules. Also exhibits THF-independent aldolase activity toward beta-hydroxyamino acids, producing glycine and aldehydes, via a retro-aldol mechanism. This is Serine hydroxymethyltransferase from Staphylococcus aureus (strain bovine RF122 / ET3-1).